A 255-amino-acid polypeptide reads, in one-letter code: Menaquinone reductase, iron-sulfur cluster-binding subunit (255 aa).

3 consecutive 4Fe-4S ferredoxin-type domains span residues 11–41 (WGMV…PQPD), 66–97 (HDVA…KNEE), and 99–128 (GIVS…FNWF). The [4Fe-4S] cluster site is built by Cys-20, Cys-23, Cys-26, Cys-30, Cys-75, Cys-78, Cys-83, Cys-87, Cys-108, Cys-111, Cys-114, and Cys-118. [3Fe-4S] cluster is bound by residues Cys-155, Cys-158, Cys-188, and Cys-192.

The Qrc complex is composed of four subunits: QrcA, QrcB, QrcC and QrcD. Can form a supercomplex with the [NiFe] hydrogenase HynA1 and the tetraheme Type I cytochrome c3 TpIc(3), its physiological electron donors. Requires [4Fe-4S] cluster as cofactor. [3Fe-4S] cluster serves as cofactor.

The protein localises to the periplasm. Its function is as follows. Component of the respiratory Qrc complex, that catalyzes the reduction of the menaquinone pool using electrons transferred from the reduced periplasmic cytochrome c3, and which is probably involved in sulfate respiration. Is likely essential for growth on H(2) or formate since the periplasmic hydrogenases and/or formate dehydrogenases act as primary electron donors for the Qrc complex. QrcC is an electron-transferring subunit; its cubane iron sulfur clusters form a pathway for electron transfer between the hemes of QrcA and the membrane quinone pool. The polypeptide is Menaquinone reductase, iron-sulfur cluster-binding subunit (Nitratidesulfovibrio vulgaris (strain ATCC 29579 / DSM 644 / CCUG 34227 / NCIMB 8303 / VKM B-1760 / Hildenborough) (Desulfovibrio vulgaris)).